The chain runs to 179 residues: Large ribosomal subunit protein uL5 (179 aa).

The protein belongs to the universal ribosomal protein uL5 family. In terms of assembly, part of the 50S ribosomal subunit; part of the 5S rRNA/L5/L18/L25 subcomplex. Contacts the 5S rRNA and the P site tRNA. Forms a bridge to the 30S subunit in the 70S ribosome.

Functionally, this is one of the proteins that bind and probably mediate the attachment of the 5S RNA into the large ribosomal subunit, where it forms part of the central protuberance. In the 70S ribosome it contacts protein S13 of the 30S subunit (bridge B1b), connecting the 2 subunits; this bridge is implicated in subunit movement. Contacts the P site tRNA; the 5S rRNA and some of its associated proteins might help stabilize positioning of ribosome-bound tRNAs. The polypeptide is Large ribosomal subunit protein uL5 (Trichlorobacter lovleyi (strain ATCC BAA-1151 / DSM 17278 / SZ) (Geobacter lovleyi)).